The sequence spans 547 residues: GMP synthase [glutamine-hydrolyzing] (547 aa).

The 199-residue stretch at 12–210 (KILILDFGSQ…VLDIAGAKPD (199 aa)) folds into the Glutamine amidotransferase type-1 domain. Cysteine 89 acts as the Nucleophile in catalysis. Catalysis depends on residues histidine 184 and glutamate 186. Positions 211–403 (WIMRDHIEEA…LGLPAEMVYR (193 aa)) constitute a GMPS ATP-PPase domain. 238–244 (SGGVDSS) is an ATP binding site.

As to quaternary structure, homodimer.

The enzyme catalyses XMP + L-glutamine + ATP + H2O = GMP + L-glutamate + AMP + diphosphate + 2 H(+). The protein operates within purine metabolism; GMP biosynthesis; GMP from XMP (L-Gln route): step 1/1. Catalyzes the synthesis of GMP from XMP. This Burkholderia pseudomallei (strain 1710b) protein is GMP synthase [glutamine-hydrolyzing].